Reading from the N-terminus, the 98-residue chain is MERKKFSSKFIHLLIVFLLLCTFLSRTESALPYHHELFLGRKRMNYYKPNSAIGTPSSTSDHAPGSNGRKLMSIYRPNGDIFTGPSGSGHGGGRTPAP.

Positions methionine 1–serine 29 are cleaved as a signal peptide. Residues asparagine 50–proline 98 are disordered. The span at alanine 52–aspartate 61 shows a compositional bias: polar residues. Short sequence motifs (SCOOP motif) lie at residues alanine 52–serine 66 and aspartate 80–arginine 94. 2 consecutive short sequence motifs (sxS motif essential for MIK2 binding) follow at residues serine 58–serine 60 and serine 86–serine 88. Over residues serine 86 to proline 98 the composition is skewed to gly residues.

Belongs to the serine rich endogenous peptide (SCOOP) phytocytokine family. As to quaternary structure, interacts with MIK2 (via extracellular leucine-rich repeat domain); this interaction triggers the formation of complex between MIK2 and the BAK1/SERK3 and SERK4 coreceptors, and subsequent BAK1 activation by phosphorylation. Mostly expressed in leaves and seedlings shoots, to a lower extent, in roots, but barely in flowers.

Its subcellular location is the cell membrane. It is found in the secreted. The protein resides in the extracellular space. It localises to the apoplast. Its function is as follows. Brassicaceae-specific phytocytokine (plant endogenous peptide released into the apoplast) perceived by MIK2 in a BAK1/SERK3 and SERK4 coreceptors-dependent manner, that modulates various physiological and antimicrobial processes including growth prevention and reactive oxygen species (ROS) response regulation. Inhibits root growth and regulates root meristems. Promotes ROS production and MAPK (e.g. MPK3, MPK4 and MPK6) activation in a MIK2-dependent manner, thus leading to the up-regulation of immune-related marker genes (e.g. WRKY30, WRKY33 and CYP81F2). The protein is Serine rich endogenous peptide 10 of Arabidopsis thaliana (Mouse-ear cress).